The primary structure comprises 41 residues: Large ribosomal subunit protein bL36 (41 aa).

The protein belongs to the bacterial ribosomal protein bL36 family.

This is Large ribosomal subunit protein bL36 from Opitutus terrae (strain DSM 11246 / JCM 15787 / PB90-1).